The chain runs to 213 residues: Thymidylate kinase (213 aa).

10 to 17 (GIDGCGKT) is an ATP binding site.

This sequence belongs to the thymidylate kinase family.

It catalyses the reaction dTMP + ATP = dTDP + ADP. Functionally, phosphorylation of dTMP to form dTDP in both de novo and salvage pathways of dTTP synthesis. The chain is Thymidylate kinase from Synechococcus sp. (strain WH7803).